Reading from the N-terminus, the 375-residue chain is DNA replication and repair protein RecF (375 aa).

30 to 37 provides a ligand contact to ATP; it reads GNNAQGKS.

This sequence belongs to the RecF family.

It localises to the cytoplasm. Functionally, the RecF protein is involved in DNA metabolism; it is required for DNA replication and normal SOS inducibility. RecF binds preferentially to single-stranded, linear DNA. It also seems to bind ATP. The protein is DNA replication and repair protein RecF of Microcystis aeruginosa (strain NIES-843 / IAM M-2473).